Here is a 396-residue protein sequence, read N- to C-terminus: MNLIKMSDIDLSGKRVLIREDLNVPIKDGMITSDQRLQAALPTIKSALDSGAAVIVLSHLGRPEEGKYEKKFSLEPVADYLRKNLEYPVRFVKDYLSGVDVNPGELAVCENVRFNPGEKSNDESLAKKLANLCDVFVMDAFGTAHRAQASTYGVAQYAPVAVSGPLLIRELEALNQVLKAPKKPIVAIVGGAKVSSKLSLLKQLVGMVDVLIPGGGIANTFLKAQGFEIGISLYEPDLLDEARHILILAKEKGCQIPLPTDVVVGKTFSETCPAFNKSLSNVAADDMILDIGPETIRDYVDLIHEANTIIWNGPVGVFEFPQFAYGTRAIAIAIAESNAFSIAGGGDTLAAVDLYDLNQQISYISTGGGAFLECLEGKTLPAVAILQERAKHVKTN.

Substrate contacts are provided by residues 21 to 23 (DLN), Arg-36, 59 to 62 (HLGR), Arg-113, and Arg-146. ATP contacts are provided by residues Lys-197, Glu-319, and 345–348 (GGDT).

It belongs to the phosphoglycerate kinase family. As to quaternary structure, monomer.

The protein resides in the cytoplasm. The catalysed reaction is (2R)-3-phosphoglycerate + ATP = (2R)-3-phospho-glyceroyl phosphate + ADP. It functions in the pathway carbohydrate degradation; glycolysis; pyruvate from D-glyceraldehyde 3-phosphate: step 2/5. The chain is Phosphoglycerate kinase from Legionella pneumophila (strain Lens).